A 392-amino-acid chain; its full sequence is NAD(P)H-quinone oxidoreductase subunit H, chloroplastic (392 aa).

It belongs to the complex I 49 kDa subunit family. In terms of assembly, NDH is composed of at least 16 different subunits, 5 of which are encoded in the nucleus.

The protein localises to the plastid. The protein resides in the chloroplast thylakoid membrane. The catalysed reaction is a plastoquinone + NADH + (n+1) H(+)(in) = a plastoquinol + NAD(+) + n H(+)(out). It catalyses the reaction a plastoquinone + NADPH + (n+1) H(+)(in) = a plastoquinol + NADP(+) + n H(+)(out). NDH shuttles electrons from NAD(P)H:plastoquinone, via FMN and iron-sulfur (Fe-S) centers, to quinones in the photosynthetic chain and possibly in a chloroplast respiratory chain. The immediate electron acceptor for the enzyme in this species is believed to be plastoquinone. Couples the redox reaction to proton translocation, and thus conserves the redox energy in a proton gradient. In Marchantia polymorpha (Common liverwort), this protein is NAD(P)H-quinone oxidoreductase subunit H, chloroplastic.